A 61-amino-acid polypeptide reads, in one-letter code: Temporin-MT3 (61 aa).

Residues 1–22 (MFTLKKPLLLLFFLGTINLSLC) form the signal peptide. A propeptide spans 23-44 (EQERNAEEERRDEPDERNAEVE) (removed in mature form). The residue at position 59 (Leu59) is a Leucine amide.

It belongs to the frog skin active peptide (FSAP) family. Temporin subfamily. Expressed by the skin glands.

The protein resides in the secreted. Antimicrobial peptide. This Amolops mantzorum (Sichuan torrent frog) protein is Temporin-MT3.